A 446-amino-acid polypeptide reads, in one-letter code: COBRA-like protein 1 (446 aa).

The N-terminal stretch at 1–28 (MALLLLRMGVSVALLVAFFSSLIPSSEA) is a signal peptide. N37, N162, N170, N209, N234, N316, N331, N350, and N419 each carry an N-linked (GlcNAc...) asparagine glycan. A420 carries the GPI-anchor amidated alanine lipid modification. The propeptide at 421–446 (STRVMSSILLPFITIWTALTFLMVYA) is removed in mature form.

This sequence belongs to the COBRA family.

The protein localises to the cell membrane. Its function is as follows. Involved in determining the orientation of cell expansion, probably by playing an important role in cellulose deposition. May act by recruiting cellulose synthesizing complexes to discrete positions on the cell surface. This Oryza sativa subsp. japonica (Rice) protein is COBRA-like protein 1 (BC1L6).